Here is a 20-residue protein sequence, read N- to C-terminus: Pregnancy-associated glycoprotein 73B (20 aa).

The protein belongs to the peptidase A1 family. Post-translationally, N-glycosylated. In terms of tissue distribution, expressed in chorionic epithelium (trophectoderm).

It is found in the secreted. The protein localises to the extracellular space. The sequence is that of Pregnancy-associated glycoprotein 73B from Bubalus bubalis (Domestic water buffalo).